We begin with the raw amino-acid sequence, 299 residues long: Glutamate formimidoyltransferase (299 aa).

H82 (for formimidoyltransferase activity) is an active-site residue. A folate-binding site is contributed by 163-172; that stretch reads GDRKIHPTAG.

This sequence belongs to the formiminotransferase family.

The protein resides in the cytoplasm. The catalysed reaction is (6S)-5-formyl-5,6,7,8-tetrahydrofolate + L-glutamate = N-formyl-L-glutamate + (6S)-5,6,7,8-tetrahydrofolate + H(+). The enzyme catalyses 5-formimidoyltetrahydrofolate + L-glutamate = N-formimidoyl-L-glutamate + (6S)-5,6,7,8-tetrahydrofolate. It carries out the reaction (6S)-5-formyl-5,6,7,8-tetrahydrofolate + ATP = (6R)-5,10-methenyltetrahydrofolate + ADP + phosphate. It participates in amino-acid degradation; L-histidine degradation into L-glutamate; L-glutamate from N-formimidoyl-L-glutamate (transferase route): step 1/1. It functions in the pathway one-carbon metabolism; tetrahydrofolate interconversion. In terms of biological role, catalyzes the transfer of the formyl group from N-formylglutamate to tetrahydrofolate (THF) to yield 5-formyltetrahydrofolate (5-CHO-THF) and glutamate (Glu). The triglutamate form of 5-CHO-THF (5-CHO-THF-Glu3) can also be used as substrate. It can also catalyze the transfer of the formimino group from N-formiminoglutamate to tetrahydrofolate (THF) to yield 5-formiminotetrahydrofolate (5-NH=CH-THF) and glutamate (Glu). It can replace YgfA to catalyze the irreversible ATP-dependent transformation of 5-CHO-THF to form 5,10-methenyltetrahydrofolate (5,10-CH=THF). This chain is Glutamate formimidoyltransferase, found in Streptococcus pyogenes serotype M1.